The following is a 1213-amino-acid chain: DNA-directed RNA polymerase subunit beta (1213 aa).

Residues 1153–1213 (RDMDEDSSEH…ADESDGKVSK (61 aa)) are disordered. Residues 1171-1198 (MAEEQEKKKLAEETGKSENKEDSNETAD) are compositionally biased toward basic and acidic residues.

The protein belongs to the RNA polymerase beta chain family. As to quaternary structure, the RNAP catalytic core consists of 2 alpha, 1 beta, 1 beta' and 1 omega subunit. When a sigma factor is associated with the core the holoenzyme is formed, which can initiate transcription.

It carries out the reaction RNA(n) + a ribonucleoside 5'-triphosphate = RNA(n+1) + diphosphate. Its function is as follows. DNA-dependent RNA polymerase catalyzes the transcription of DNA into RNA using the four ribonucleoside triphosphates as substrates. The polypeptide is DNA-directed RNA polymerase subunit beta (Lactobacillus acidophilus (strain ATCC 700396 / NCK56 / N2 / NCFM)).